The sequence spans 228 residues: Probable septum site-determining protein MinC (228 aa).

The protein belongs to the MinC family. Interacts with MinD and FtsZ.

Functionally, cell division inhibitor that blocks the formation of polar Z ring septums. Rapidly oscillates between the poles of the cell to destabilize FtsZ filaments that have formed before they mature into polar Z rings. Prevents FtsZ polymerization. In Bacillus cereus (strain G9842), this protein is Probable septum site-determining protein MinC.